A 1049-amino-acid chain; its full sequence is Self-sufficient cytochrome P450 monooxygenase CYP505E4 (1049 aa).

Position 405 (cysteine 405) interacts with heme. Residues 461-470 (SATALSQHNM) show a composition bias toward polar residues. The disordered stretch occupies residues 461 to 491 (SATALSQHNMSAGATASPGSSTHLAGDENGQ). The span at 471–482 (SAGATASPGSST) shows a compositional bias: low complexity. Residues 499–640 (ISFFYGSNSG…DLEVWEETNL (142 aa)) form the Flavodoxin-like domain. FMN-binding positions include 505–509 (SNSGT) and 584–616 (VFGCGHQDWTKTFYRIPILIDDLMHKAGATRLT). In terms of domain architecture, FAD-binding FR-type spans 678–906 (RDLVEGKVTA…RPAKDAFHLP (229 aa)).

It in the N-terminal section; belongs to the cytochrome P450 family. FAD is required as a cofactor. FMN serves as cofactor. It depends on heme as a cofactor.

It carries out the reaction 2 oxidized [cytochrome P450] + NADPH = 2 reduced [cytochrome P450] + NADP(+) + H(+). It catalyses the reaction an organic molecule + reduced [NADPH--hemoprotein reductase] + O2 = an alcohol + oxidized [NADPH--hemoprotein reductase] + H2O + H(+). The catalysed reaction is dodecanoate + reduced [NADPH--hemoprotein reductase] + O2 = 5-hydroxydodecanoate + oxidized [NADPH--hemoprotein reductase] + H2O + H(+). The enzyme catalyses dodecan-1-ol + reduced [NADPH--hemoprotein reductase] + O2 = 1,5-dodecanediol + oxidized [NADPH--hemoprotein reductase] + H2O + H(+). It carries out the reaction dodecanoate + reduced [NADPH--hemoprotein reductase] + O2 = 9-hydroxydodecanoate + oxidized [NADPH--hemoprotein reductase] + H2O + H(+). It catalyses the reaction dodecan-1-ol + reduced [NADPH--hemoprotein reductase] + O2 = 1,4-dodecanediol + oxidized [NADPH--hemoprotein reductase] + H2O + H(+). The catalysed reaction is dodecan-1-ol + reduced [NADPH--hemoprotein reductase] + O2 = 1,6-dodecanediol + oxidized [NADPH--hemoprotein reductase] + H2O + H(+). Its function is as follows. Self-sufficient cytochrome P450 monooxygenase that catalyzes the regioselective in-chain hydroxylation of alkanes, fatty alcohols, and fatty acids at the omega-7 position. Performs hydroxylation of C10-C16 n-alkanes and C12 and C14 fatty alcohols; and thereby enables the one step biocatalytic synthesis of rare alcohols such as 5-dodecanol and 7-tetradecanol. Converts 1-dodecanol into 1,5-dodecanediol as major product with very little sub-terminally hydroxylated products with the 1,4-dodecanediol and 1,6-dodecanediol more abundant. Converts dodecanoic acid to 5-hydroxydodecanoic acid which can be further converted into delta-dodecalactone by lactonization of the 5-hydroxy acid at low pH. Also gives sub-terminal hydroxylation of dodecanoic acid with 9-hydroxydodecanoic acid being the second most abundant product. Does not show any significant activity toward tetradecanoic acid. This Penicillium camemberti (strain FM 013) protein is Self-sufficient cytochrome P450 monooxygenase CYP505E4.